A 393-amino-acid chain; its full sequence is uncharacterized protein (393 aa).

Disordered stretches follow at residues 77 to 118 and 259 to 296; these read DSNN…SIRP and INNN…DESN. Residues 79-92 show a composition bias toward low complexity; the sequence is NNNNNNNNNNNNNN. Residues 103–114 show a composition bias toward polar residues; that stretch reads IRQSLSSPQQLV. Over residues 259 to 289 the composition is skewed to low complexity; sequence INNNNNNNNNNSNNNNNNNNSNNNDNNNNIN.

This is an uncharacterized protein from Dictyostelium discoideum (Social amoeba).